A 365-amino-acid polypeptide reads, in one-letter code: Succinyl-diaminopimelate desuccinylase (365 aa).

A Zn(2+)-binding site is contributed by His64. The active site involves Asp66. Asp95 provides a ligand contact to Zn(2+). Glu125 serves as the catalytic Proton acceptor. The Zn(2+) site is built by Glu126, Glu154, and His339.

It belongs to the peptidase M20A family. DapE subfamily. As to quaternary structure, homodimer. Zn(2+) serves as cofactor. Co(2+) is required as a cofactor.

It catalyses the reaction N-succinyl-(2S,6S)-2,6-diaminopimelate + H2O = (2S,6S)-2,6-diaminopimelate + succinate. The protein operates within amino-acid biosynthesis; L-lysine biosynthesis via DAP pathway; LL-2,6-diaminopimelate from (S)-tetrahydrodipicolinate (succinylase route): step 3/3. Catalyzes the hydrolysis of N-succinyl-L,L-diaminopimelic acid (SDAP), forming succinate and LL-2,6-diaminopimelate (DAP), an intermediate involved in the bacterial biosynthesis of lysine and meso-diaminopimelic acid, an essential component of bacterial cell walls. The protein is Succinyl-diaminopimelate desuccinylase of Nautilia profundicola (strain ATCC BAA-1463 / DSM 18972 / AmH).